Consider the following 573-residue polypeptide: Potassium-transporting ATPase potassium-binding subunit (573 aa).

Transmembrane regions (helical) follow at residues 6–26, 66–86, 135–155, 177–197, 257–277, 283–303, 382–402, 428–448, 493–513, and 537–557; these read ILFA…GSYI, FFSL…ILLL, ALAV…IALI, IFWI…FQGV, IQMV…GKWV, GWLI…VMTI, IFGG…LAVF, MFAL…AAVI, ITIA…VIML, and FIFA…TIFP.

The protein belongs to the KdpA family. In terms of assembly, the system is composed of three essential subunits: KdpA, KdpB and KdpC.

The protein localises to the cell inner membrane. Part of the high-affinity ATP-driven potassium transport (or Kdp) system, which catalyzes the hydrolysis of ATP coupled with the electrogenic transport of potassium into the cytoplasm. This subunit binds the periplasmic potassium ions and delivers the ions to the membrane domain of KdpB through an intramembrane tunnel. This is Potassium-transporting ATPase potassium-binding subunit from Francisella tularensis subsp. novicida (strain U112).